Consider the following 62-residue polypeptide: Photosystem II reaction center protein Z (62 aa).

A run of 2 helical transmembrane segments spans residues 8-28 (SVFALIILSFLLVIGVPVVLA) and 41-61 (FSGASLWIGLVFLVGILNSFI).

The protein belongs to the PsbZ family. In terms of assembly, PSII is composed of 1 copy each of membrane proteins PsbA, PsbB, PsbC, PsbD, PsbE, PsbF, PsbH, PsbI, PsbJ, PsbK, PsbL, PsbM, PsbT, PsbY, PsbZ, Psb30/Ycf12, at least 3 peripheral proteins of the oxygen-evolving complex and a large number of cofactors. It forms dimeric complexes.

It localises to the plastid. It is found in the chloroplast thylakoid membrane. Its function is as follows. May control the interaction of photosystem II (PSII) cores with the light-harvesting antenna, regulates electron flow through the 2 photosystem reaction centers. PSII is a light-driven water plastoquinone oxidoreductase, using light energy to abstract electrons from H(2)O, generating a proton gradient subsequently used for ATP formation. The protein is Photosystem II reaction center protein Z of Staurastrum punctulatum (Green alga).